A 706-amino-acid polypeptide reads, in one-letter code: MNNNFNGGNNTGNNFTGNTLSNGICTKKNMKGTLSRTAIFSDGISDDLICCLDPIYNNNDNNNDAICDELGLTPIDNNTICSTDFTPINVMRTDPFRKKSTQELTREWTEWKENSPSLFTPAIVGVVTSFLLQSLKKQATSFLLKTLTDLLFPNNSSLTMEEILRATEQYVQERLDTDTANRVSQELVGLKNNLTTFNDQVEDFLQNRVGISPLAIIDSINTMQQLFVNRLPQFQVSGYQVLLLPLFAQAATLHLTFLRDVIINADEWNIPTAQLNTYTRYFKEYIAEYSNYALSTYDDGFRTRFYPRNTLEDMLQFKTFMTLNALDLVSIWSLLKYVNLYVSTSANLYNIGDNKVNEGAYPISYGPFFNSYIQTKSNYVLSGVSGIGARFTYSTVLGRYLHDDLKNIITTYVGGTQGPNIGVQLSTTELDELKKQQQATRDSLVDFQFFTLNCMLPNPITAPYFATSLYESRYSSIGGYLRKDVFKSEDSTCGLGNPGAWTSYPDYYITNISATVQINGENTDTTPLYFKENRPITSTRGVNKVIAVYNRKANIAGTNQNGTMIHQAPPDGTGFTVSPLHPSANTITSYIKENYGNSGDSLHLKGQGYLHYMLSGNGQDRYRLVLRLSGAANQIKLQSPTTSIYAFDTSTNNEGITDNGSKFKDFAFSTPFVIPEQKEIVLYFEGVGSLDLMNLIFLPADDTPLY.

Belongs to the delta endotoxin family.

In terms of biological role, binds to the brush border membrane vesicles of scarab larvae and somehow damages the gut wall to allow the vegetative cells of P.popilliae to enter the hemolymph. Active on M.melolontha. This chain is Parasporal crystal protein Cry18Aa (cry18Aa), found in Paenibacillus popilliae (Bacillus popilliae).